The chain runs to 310 residues: Aspartate carbamoyltransferase catalytic subunit (310 aa).

Residues arginine 57 and threonine 58 each coordinate carbamoyl phosphate. Lysine 86 provides a ligand contact to L-aspartate. Residues arginine 107, histidine 135, and glutamine 138 each coordinate carbamoyl phosphate. 2 residues coordinate L-aspartate: arginine 168 and arginine 229. The carbamoyl phosphate site is built by leucine 268 and proline 269.

It belongs to the aspartate/ornithine carbamoyltransferase superfamily. ATCase family. As to quaternary structure, heterooligomer of catalytic and regulatory chains.

It catalyses the reaction carbamoyl phosphate + L-aspartate = N-carbamoyl-L-aspartate + phosphate + H(+). It participates in pyrimidine metabolism; UMP biosynthesis via de novo pathway; (S)-dihydroorotate from bicarbonate: step 2/3. Functionally, catalyzes the condensation of carbamoyl phosphate and aspartate to form carbamoyl aspartate and inorganic phosphate, the committed step in the de novo pyrimidine nucleotide biosynthesis pathway. This Thermococcus onnurineus (strain NA1) protein is Aspartate carbamoyltransferase catalytic subunit.